Here is a 117-residue protein sequence, read N- to C-terminus: Large ribosomal subunit protein bL19 (117 aa).

The protein belongs to the bacterial ribosomal protein bL19 family.

This protein is located at the 30S-50S ribosomal subunit interface and may play a role in the structure and function of the aminoacyl-tRNA binding site. The sequence is that of Large ribosomal subunit protein bL19 from Mycoplasmopsis pulmonis (strain UAB CTIP) (Mycoplasma pulmonis).